The chain runs to 84 residues: Large ribosomal subunit protein bL31 (84 aa).

Residues Cys16, Cys18, Cys38, and Cys41 each coordinate Zn(2+).

The protein belongs to the bacterial ribosomal protein bL31 family. Type A subfamily. As to quaternary structure, part of the 50S ribosomal subunit. The cofactor is Zn(2+).

Functionally, binds the 23S rRNA. The sequence is that of Large ribosomal subunit protein bL31 from Mycobacterium leprae (strain Br4923).